The primary structure comprises 361 residues: Protein YIM1-2 (361 aa).

It belongs to the YIM1 family.

Its subcellular location is the lipid droplet. The protein localises to the mitochondrion. This Lachancea thermotolerans (strain ATCC 56472 / CBS 6340 / NRRL Y-8284) (Yeast) protein is Protein YIM1-2 (YIM1-2).